The following is a 366-amino-acid chain: IgG receptor FcRn large subunit p51 (366 aa).

The N-terminal stretch at methionine 1–glycine 22 is a signal peptide. An alpha-1 region spans residues alanine 23 to threonine 111. The Extracellular portion of the chain corresponds to alanine 23 to serine 298. N-linked (GlcNAc...) asparagine glycans are attached at residues asparagine 109, asparagine 126, asparagine 150, and asparagine 247. The interval phenylalanine 112–lysine 201 is alpha-2. 2 cysteine pairs are disulfide-bonded: cysteine 120–cysteine 183 and cysteine 222–cysteine 276. The alpha-3 stretch occupies residues glutamate 202–leucine 291. Positions proline 203–aspartate 290 constitute an Ig-like C1-type domain. Residues serine 293 to serine 298 form a connecting peptide region. A helical transmembrane segment spans residues valine 299–tryptophan 322. Residues asparagine 323–serine 366 are Cytoplasmic-facing. Position 335 is a phosphoserine (serine 335). Residues leucine 344–serine 366 are disordered.

It belongs to the immunoglobulin superfamily. FcRn complex consists of two subunits: p51, and p14 which is equivalent to beta-2-microglobulin. It forms an MHC class I-like heterodimer. Interacts with albumin/ALB; this interaction regulates ALB homeostasis. As to expression, intestinal epithelium.

It localises to the cell membrane. It is found in the endosome membrane. In terms of biological role, cell surface receptor that transfers passive humoral immunity from the mother to the newborn. Binds to the Fc region of monomeric immunoglobulin gamma and mediates its selective uptake from milk. IgG in the milk is bound at the apical surface of the intestinal epithelium. The resultant FcRn-IgG complexes are transcytosed across the intestinal epithelium and IgG is released from FcRn into blood or tissue fluids. Throughout life, contributes to effective humoral immunity by recycling IgG and extending its half-life in the circulation. Mechanistically, monomeric IgG binding to FcRn in acidic endosomes of endothelial and hematopoietic cells recycles IgG to the cell surface where it is released into the circulation. In addition of IgG, regulates homeostasis of the other most abundant circulating protein albumin/ALB. This is IgG receptor FcRn large subunit p51 (Fcgrt) from Rattus norvegicus (Rat).